Reading from the N-terminus, the 695-residue chain is Polyribonucleotide nucleotidyltransferase (695 aa).

Mg(2+) is bound by residues D488 and D494. Residues 554–613 (PKTAVIKIQTDKIRDLIGKGGETIKGIISTSSASVDVDDNGNVNIFSNDQKSFDTAMQMV) enclose the KH domain. An S1 motif domain is found at 623–690 (GKVYTGKVVK…DRGRIKLSRK (68 aa)).

The protein belongs to the polyribonucleotide nucleotidyltransferase family. Component of the RNA degradosome, which is a multiprotein complex involved in RNA processing and mRNA degradation. Mg(2+) serves as cofactor.

It is found in the cytoplasm. It carries out the reaction RNA(n+1) + phosphate = RNA(n) + a ribonucleoside 5'-diphosphate. Its function is as follows. Involved in mRNA degradation. Catalyzes the phosphorolysis of single-stranded polyribonucleotides processively in the 3'- to 5'-direction. In Ruthia magnifica subsp. Calyptogena magnifica, this protein is Polyribonucleotide nucleotidyltransferase.